Reading from the N-terminus, the 123-residue chain is Small ribosomal subunit protein uS12 (123 aa).

D89 carries the 3-methylthioaspartic acid modification. Positions 100 to 123 are disordered; the sequence is GSLDTSGVSDRKQGRSKYGTKRPK. Residues 113–123 show a composition bias toward basic residues; that stretch reads GRSKYGTKRPK.

The protein belongs to the universal ribosomal protein uS12 family. In terms of assembly, part of the 30S ribosomal subunit. Contacts proteins S8 and S17. May interact with IF1 in the 30S initiation complex.

Its function is as follows. With S4 and S5 plays an important role in translational accuracy. Functionally, interacts with and stabilizes bases of the 16S rRNA that are involved in tRNA selection in the A site and with the mRNA backbone. Located at the interface of the 30S and 50S subunits, it traverses the body of the 30S subunit contacting proteins on the other side and probably holding the rRNA structure together. The combined cluster of proteins S8, S12 and S17 appears to hold together the shoulder and platform of the 30S subunit. This chain is Small ribosomal subunit protein uS12, found in Saccharophagus degradans (strain 2-40 / ATCC 43961 / DSM 17024).